Reading from the N-terminus, the 333-residue chain is Type II secretion system protein K (333 aa).

A propeptide spans 1-7 (MRRGQNG) (leader sequence). A helical transmembrane segment spans residues 8 to 29 (VALITVLLVVAVVTIVCAGLII). Residues 30–333 (RQQLAIRSSA…GGDDWKKDER (304 aa)) are Periplasmic-facing. The interval 313 to 333 (MGQGGLPIPSTGGDDWKKDER) is disordered.

It belongs to the GSP K family. Type II secretion is composed of four main components: the outer membrane complex, the inner membrane complex, the cytoplasmic secretion ATPase and the periplasm-spanning pseudopilus. Interacts with the tip of the type II pseudopilus subunits XcpV, XcpU and XcpW. Interacts with core component XcpT. Post-translationally, cleaved by prepilin peptidase.

The protein localises to the cell inner membrane. Functionally, component of the type II secretion system required for the energy-dependent secretion of extracellular factors such as proteases and toxins from the periplasm. Plays a role in pseudopilus assembly and seems to control its length. Interacts with the pseudopilus tip complex that is critical for the recognition and binding of secretion substrates. Type II pseudopilus confers increased bacterial adhesive capabilities. This chain is Type II secretion system protein K (xcpX), found in Pseudomonas aeruginosa (strain ATCC 15692 / DSM 22644 / CIP 104116 / JCM 14847 / LMG 12228 / 1C / PRS 101 / PAO1).